Reading from the N-terminus, the 304-residue chain is tRNA pseudouridine synthase B (304 aa).

Asp-38 functions as the Nucleophile in the catalytic mechanism. Positions 227–302 (LPKVEIYKDF…RIFKLKKVFK (76 aa)) constitute a PUA domain.

Belongs to the pseudouridine synthase TruB family. Type 1 subfamily.

The catalysed reaction is uridine(55) in tRNA = pseudouridine(55) in tRNA. Its function is as follows. Responsible for synthesis of pseudouridine from uracil-55 in the psi GC loop of transfer RNAs. In Thermosipho melanesiensis (strain DSM 12029 / CIP 104789 / BI429), this protein is tRNA pseudouridine synthase B.